The chain runs to 396 residues: Enoyl-[acyl-carrier-protein] reductase [NADH] (396 aa).

Residues 47–52 (GASTGF), 73–74 (FE), 110–111 (DA), and 138–139 (LA) contribute to the NAD(+) site. Tyr-224 serves as a coordination point for substrate. The active-site Proton donor is Tyr-234. Residues Lys-243 and 272–274 (LVT) contribute to the NAD(+) site.

Belongs to the TER reductase family. As to quaternary structure, monomer.

The catalysed reaction is a 2,3-saturated acyl-[ACP] + NAD(+) = a (2E)-enoyl-[ACP] + NADH + H(+). The protein operates within lipid metabolism; fatty acid biosynthesis. Its function is as follows. Involved in the final reduction of the elongation cycle of fatty acid synthesis (FAS II). Catalyzes the reduction of a carbon-carbon double bond in an enoyl moiety that is covalently linked to an acyl carrier protein (ACP). This Cytophaga hutchinsonii (strain ATCC 33406 / DSM 1761 / CIP 103989 / NBRC 15051 / NCIMB 9469 / D465) protein is Enoyl-[acyl-carrier-protein] reductase [NADH].